We begin with the raw amino-acid sequence, 499 residues long: ATP synthase subunit beta, chloroplastic (499 aa).

Position 170-177 (170-177) interacts with ATP; that stretch reads GGAGVGKT.

The protein belongs to the ATPase alpha/beta chains family. F-type ATPases have 2 components, CF(1) - the catalytic core - and CF(0) - the membrane proton channel. CF(1) has five subunits: alpha(3), beta(3), gamma(1), delta(1), epsilon(1). CF(0) has four main subunits: a(1), b(1), b'(1) and c(9-12).

Its subcellular location is the plastid. It localises to the chloroplast thylakoid membrane. The catalysed reaction is ATP + H2O + 4 H(+)(in) = ADP + phosphate + 5 H(+)(out). Produces ATP from ADP in the presence of a proton gradient across the membrane. The catalytic sites are hosted primarily by the beta subunits. This Ipomoea purpurea (Common morning glory) protein is ATP synthase subunit beta, chloroplastic.